We begin with the raw amino-acid sequence, 319 residues long: GATA transcription factor 18 (319 aa).

A compositionally biased stretch (low complexity) spans 1-15; that stretch reads MPDAAAAAAAAQDAD. A disordered region spans residues 1–74; that stretch reads MPDAAAAAAA…AAPEPVSALL (74 aa). The segment covering 32 to 60 has biased composition (acidic residues); it reads NNDDDGDDGTEEDEEEDDDEEGDEEELPP. The Tify domain occupies 74-109; the sequence is LPGSPNQLTLLFQGEVYVFESVTPEKVQAVLLLLGS. The CCT domain maps to 143–185; the sequence is RVASLIRFREKRKERNFDKKIRYAVRKEVALRMQRRKGQFAGR. A GATA-type zinc finger spans residues 215-242; sequence CQNCGTSEKMTPAMRRGPAGPRTLCNAC. Positions 292 to 319 are disordered; sequence ITASHGEVMGDSTPANEAEIGAPKAQSQ.

The protein belongs to the type IV zinc-finger family. Class C subfamily.

The protein resides in the nucleus. Functionally, transcriptional activator that specifically binds 5'-GATA-3' or 5'-GAT-3' motifs within gene promoters. This is GATA transcription factor 18 from Oryza sativa subsp. indica (Rice).